The primary structure comprises 53 residues: UPF0391 membrane protein ECA0470 (53 aa).

2 consecutive transmembrane segments (helical) span residues 4-24 (WGIIFLVIALIAAALGFGGLA) and 30-47 (AAKIVFVVGIILFLVSLF).

It belongs to the UPF0391 family.

The protein localises to the cell membrane. In Pectobacterium atrosepticum (strain SCRI 1043 / ATCC BAA-672) (Erwinia carotovora subsp. atroseptica), this protein is UPF0391 membrane protein ECA0470.